Consider the following 272-residue polypeptide: Ethanolamine ammonia-lyase small subunit (272 aa).

Adenosylcob(III)alamin-binding residues include valine 161, glutamate 182, and cysteine 211.

The protein belongs to the EutC family. The basic unit is a heterodimer which dimerizes to form tetramers. The heterotetramers trimerize; 6 large subunits form a core ring with 6 small subunits projecting outwards. It depends on adenosylcob(III)alamin as a cofactor.

Its subcellular location is the bacterial microcompartment. It catalyses the reaction ethanolamine = acetaldehyde + NH4(+). It functions in the pathway amine and polyamine degradation; ethanolamine degradation. Its function is as follows. Catalyzes the deamination of various vicinal amino-alcohols to oxo compounds. Allows this organism to utilize ethanolamine as the sole source of nitrogen and carbon in the presence of external vitamin B12. This Pseudomonas putida (strain ATCC 700007 / DSM 6899 / JCM 31910 / BCRC 17059 / LMG 24140 / F1) protein is Ethanolamine ammonia-lyase small subunit.